The sequence spans 61 residues: Large ribosomal subunit protein uL30 (61 aa).

This sequence belongs to the universal ribosomal protein uL30 family. As to quaternary structure, part of the 50S ribosomal subunit.

In Lactobacillus delbrueckii subsp. bulgaricus (strain ATCC 11842 / DSM 20081 / BCRC 10696 / JCM 1002 / NBRC 13953 / NCIMB 11778 / NCTC 12712 / WDCM 00102 / Lb 14), this protein is Large ribosomal subunit protein uL30.